We begin with the raw amino-acid sequence, 94 residues long: Myosuppressin (94 aa).

An N-terminal signal peptide occupies residues 1–24 (MMSPTLMILISITTMAILSGESFG). Positions 25-80 (AMPAQCNSEFLEELPPRLRKICVAIARIWDAREMNDFVDDREYRENLPRYDSSVKR) are excised as a propeptide. At glutamine 81 the chain carries Pyrrolidone carboxylic acid. Phenylalanine 90 carries the phenylalanine amide modification.

As to expression, expressed throughout the nervous system (at protein level).

The protein localises to the secreted. Functionally, myoinhibiting neuropeptide. The sequence is that of Myosuppressin from Camponotus floridanus (Florida carpenter ant).